The primary structure comprises 419 residues: 20-hydroxy-prefusarin hydrolase FUS2 (419 aa).

Residue serine 238 is part of the active site.

Belongs to the AB hydrolase superfamily. FUS2 hydrolase family.

Its pathway is mycotoxin biosynthesis. 20-hydroxy-prefusarin hydrolase; part of the gene cluster that mediates the biosynthesis of the mycotoxin fusarin C. Within the cluster, FUS1, FUS2, FUS8 and FUS9 are sufficient for fusarin production. The roles of the other FUS members are yet undetermined. The fusarin C synthetase FUS1 is responsible for the condensation of one acetyl-coenzyme A (CoA) unit with six malonyl-CoA units and the amide linkage of the arising heptaketide and homoserine, subsequently releasing the first intermediate, prefusarin, as an alcohol with an open ring structure. The cytochrome P450 monooxygenase FUS8 participates in multiple oxidation processes at carbon C-20 and is able to use the FUS1 product as substrate, resulting in formation of 20-hydroxy-prefusarin. This reaction seems to be essential before the 2-pyrrolidone ring closure can be catalyzed by FUS2, generating 20-hydroxy-fusarin. FUS8 is able to further oxidizes carbon C-20 after ring closure, resulting in the formation of carboxy-fusarin C. As the last step, FUS9 methylates the hydroxyl group at C-21 to generate fusarin C. Fusarin C can then rearrange to epi-fusarin C, the (z)-isomers, and fusarin A and fusarin D. The protein is 20-hydroxy-prefusarin hydrolase FUS2 of Gibberella moniliformis (strain M3125 / FGSC 7600) (Maize ear and stalk rot fungus).